Consider the following 119-residue polypeptide: Large ribosomal subunit protein uL18 (119 aa).

It belongs to the universal ribosomal protein uL18 family. In terms of assembly, part of the 50S ribosomal subunit; part of the 5S rRNA/L5/L18/L25 subcomplex. Contacts the 5S and 23S rRNAs.

This is one of the proteins that bind and probably mediate the attachment of the 5S RNA into the large ribosomal subunit, where it forms part of the central protuberance. This is Large ribosomal subunit protein uL18 from Clostridium botulinum (strain ATCC 19397 / Type A).